The following is a 106-amino-acid chain: Iron-sulfur cluster assembly protein CyaY (106 aa).

It belongs to the frataxin family.

Functionally, involved in iron-sulfur (Fe-S) cluster assembly. May act as a regulator of Fe-S biogenesis. In Salmonella newport (strain SL254), this protein is Iron-sulfur cluster assembly protein CyaY.